A 372-amino-acid polypeptide reads, in one-letter code: Glutamate 5-kinase (372 aa).

Lysine 14 provides a ligand contact to ATP. Residues serine 54, aspartate 141, and asparagine 153 each coordinate substrate. 173–174 provides a ligand contact to ATP; it reads TD. The region spanning 280–358 is the PUA domain; that stretch reads RGTLVLDDGA…ESIVRELGYM (79 aa).

The protein belongs to the glutamate 5-kinase family.

The protein resides in the cytoplasm. It catalyses the reaction L-glutamate + ATP = L-glutamyl 5-phosphate + ADP. It participates in amino-acid biosynthesis; L-proline biosynthesis; L-glutamate 5-semialdehyde from L-glutamate: step 1/2. Functionally, catalyzes the transfer of a phosphate group to glutamate to form L-glutamate 5-phosphate. This is Glutamate 5-kinase from Pseudomonas syringae pv. syringae (strain B728a).